Reading from the N-terminus, the 340-residue chain is Phenylalanine--tRNA ligase alpha subunit (340 aa).

Glu254 provides a ligand contact to Mg(2+).

Belongs to the class-II aminoacyl-tRNA synthetase family. Phe-tRNA synthetase alpha subunit type 1 subfamily. In terms of assembly, tetramer of two alpha and two beta subunits. Requires Mg(2+) as cofactor.

It localises to the cytoplasm. The catalysed reaction is tRNA(Phe) + L-phenylalanine + ATP = L-phenylalanyl-tRNA(Phe) + AMP + diphosphate + H(+). In Chloroherpeton thalassium (strain ATCC 35110 / GB-78), this protein is Phenylalanine--tRNA ligase alpha subunit.